We begin with the raw amino-acid sequence, 74 residues long: Histone H1.C8/H1.M1 (74 aa).

Residues 1-74 (MSDAAVPPKK…KAVKKAPKKK (74 aa)) form a disordered region. Positions 11–74 (ASPKKAAAKK…KAVKKAPKKK (64 aa)) are enriched in basic residues.

It is found in the nucleus. The protein resides in the chromosome. This Trypanosoma cruzi protein is Histone H1.C8/H1.M1.